The primary structure comprises 307 residues: Streptomycin 6-kinase (307 aa).

133 to 145 is a binding site for streptomycin; the sequence is LAGLLARLVSVPA. Aspartate 201 functions as the Proton acceptor in the catalytic mechanism.

The protein belongs to the aminoglycoside phosphotransferase family.

It catalyses the reaction streptomycin + ATP = streptomycin 6-phosphate + ADP + H(+). Functionally, the aminoglycoside phosphotransferases achieve inactivation of their antibiotic substrates by phosphorylation. The polypeptide is Streptomycin 6-kinase (sph) (Streptomyces glaucescens).